Reading from the N-terminus, the 262-residue chain is Small ribosomal subunit protein uS2 (262 aa).

Belongs to the universal ribosomal protein uS2 family.

In Azobacteroides pseudotrichonymphae genomovar. CFP2, this protein is Small ribosomal subunit protein uS2.